The chain runs to 229 residues: Peptidase E (229 aa).

Active-site charge relay system residues include Ser-120, Asp-135, and His-157.

It belongs to the peptidase S51 family.

The protein localises to the cytoplasm. The catalysed reaction is Dipeptidase E catalyzes the hydrolysis of dipeptides Asp-|-Xaa. It does not act on peptides with N-terminal Glu, Asn or Gln, nor does it cleave isoaspartyl peptides.. Hydrolyzes dipeptides containing N-terminal aspartate residues. May play a role in allowing the cell to use peptide aspartate to spare carbon otherwise required for the synthesis of the aspartate family of amino acids. This Escherichia coli O6:K15:H31 (strain 536 / UPEC) protein is Peptidase E.